Reading from the N-terminus, the 333-residue chain is Probable tRNA pseudouridine synthase B (333 aa).

The Nucleophile role is filled by Asp-66. The PUA domain occupies 233–308; the sequence is LKKIIVKDSA…EVVEITRVIM (76 aa).

Belongs to the pseudouridine synthase TruB family. Type 2 subfamily.

The catalysed reaction is uridine(55) in tRNA = pseudouridine(55) in tRNA. Could be responsible for synthesis of pseudouridine from uracil-55 in the psi GC loop of transfer RNAs. This chain is Probable tRNA pseudouridine synthase B, found in Methanococcus maripaludis (strain C5 / ATCC BAA-1333).